A 512-amino-acid polypeptide reads, in one-letter code: uncharacterized protein (512 aa).

The next 12 helical transmembrane spans lie at 25–45 (GFYT…VICA), 55–75 (LLYP…PLIL), 96–116 (LVVC…VFLA), 123–143 (VVTG…LPAV), 148–168 (LLLT…LVIV), 183–203 (LLWL…FVGP), 238–258 (MTTY…SLRA), 263–283 (GSLH…SMLW), 294–314 (GLLL…MVAE), 329–349 (FLLA…WISV), 359–379 (LICV…VALG), and 386–406 (ATIW…VASL). The interval 428-512 (YRPATPNPIH…APLDAGQRIA (85 aa)) is disordered.

The protein localises to the cell membrane. This is an uncharacterized protein from Mycobacterium tuberculosis (strain CDC 1551 / Oshkosh).